We begin with the raw amino-acid sequence, 242 residues long: Segregation and condensation protein A (242 aa).

It belongs to the ScpA family. In terms of assembly, component of a cohesin-like complex composed of ScpA, ScpB and the Smc homodimer, in which ScpA and ScpB bind to the head domain of Smc. The presence of the three proteins is required for the association of the complex with DNA.

It is found in the cytoplasm. Its function is as follows. Participates in chromosomal partition during cell division. May act via the formation of a condensin-like complex containing Smc and ScpB that pull DNA away from mid-cell into both cell halves. The polypeptide is Segregation and condensation protein A (Lactococcus lactis subsp. cremoris (strain SK11)).